The chain runs to 474 residues: Rhodanese-like domain-containing protein 7 (474 aa).

Disordered regions lie at residues 20–68 and 179–198; these read SSPP…SSLK and VSPE…PLAA. The segment covering 53 to 68 has biased composition (low complexity); it reads QSQPHKLSSSPSSSLK. In terms of domain architecture, Rhodanese spans 245-368; that stretch reads SDPETVVIDV…YLEEVPKTES (124 aa). The active-site Cysteine persulfide intermediate is the C328. The tract at residues 432-474 is disordered; that stretch reads RARARQTQFEEWGVIGGPDKGRRPATKPDSPRKKINAKLGSSI.

The chain is Rhodanese-like domain-containing protein 7 (STR7) from Arabidopsis thaliana (Mouse-ear cress).